We begin with the raw amino-acid sequence, 317 residues long: Polysulfide reductase chain C (317 aa).

8 helical membrane passes run 20–40 (IAVY…AIII), 54–75 (IIKA…LLIF), 98–118 (LGVL…LGVF), 147–167 (IVTF…LSAM), 182–202 (FLAS…LLFF), 221–237 (VILF…VGMY), 259–279 (LFWL…NVAL), and 289–309 (FVML…FYIL).

It belongs to the NrfD family. In terms of assembly, functional polysulfide reductase is made up of three different (A, B, and C) subunits.

The protein localises to the cell inner membrane. Its function is as follows. Could possibly serve as the membrane anchor of the enzyme. Functionally, component of the phosphorylative electron transport system with polysulfide as the terminal acceptor. The chain is Polysulfide reductase chain C (psrC) from Wolinella succinogenes (strain ATCC 29543 / DSM 1740 / CCUG 13145 / JCM 31913 / LMG 7466 / NCTC 11488 / FDC 602W) (Vibrio succinogenes).